We begin with the raw amino-acid sequence, 180 residues long: ATP synthase subunit delta (180 aa).

It belongs to the ATPase delta chain family. F-type ATPases have 2 components, F(1) - the catalytic core - and F(0) - the membrane proton channel. F(1) has five subunits: alpha(3), beta(3), gamma(1), delta(1), epsilon(1). CF(0) has four main subunits: a(1), b(1), b'(1) and c(10-14). The alpha and beta chains form an alternating ring which encloses part of the gamma chain. F(1) is attached to F(0) by a central stalk formed by the gamma and epsilon chains, while a peripheral stalk is formed by the delta, b and b' chains.

It is found in the cellular thylakoid membrane. Its function is as follows. F(1)F(0) ATP synthase produces ATP from ADP in the presence of a proton or sodium gradient. F-type ATPases consist of two structural domains, F(1) containing the extramembraneous catalytic core and F(0) containing the membrane proton channel, linked together by a central stalk and a peripheral stalk. During catalysis, ATP synthesis in the catalytic domain of F(1) is coupled via a rotary mechanism of the central stalk subunits to proton translocation. This protein is part of the stalk that links CF(0) to CF(1). It either transmits conformational changes from CF(0) to CF(1) or is implicated in proton conduction. This is ATP synthase subunit delta from Prochlorococcus marinus (strain MIT 9301).